The chain runs to 240 residues: Ribonuclease PH (240 aa).

Phosphate is bound by residues R86 and 124 to 126 (GTR).

The protein belongs to the RNase PH family. In terms of assembly, homohexameric ring arranged as a trimer of dimers.

The enzyme catalyses tRNA(n+1) + phosphate = tRNA(n) + a ribonucleoside 5'-diphosphate. Functionally, phosphorolytic 3'-5' exoribonuclease that plays an important role in tRNA 3'-end maturation. Removes nucleotide residues following the 3'-CCA terminus of tRNAs; can also add nucleotides to the ends of RNA molecules by using nucleoside diphosphates as substrates, but this may not be physiologically important. Probably plays a role in initiation of 16S rRNA degradation (leading to ribosome degradation) during starvation. The protein is Ribonuclease PH of Rickettsia prowazekii (strain Madrid E).